Reading from the N-terminus, the 389-residue chain is Probable zinc transporter zip2 (389 aa).

7 helical membrane-spanning segments follow: residues 6 to 26, 48 to 68, 88 to 108, 267 to 289, 305 to 325, 329 to 349, and 368 to 388; these read GWIL…GIYL, LVTG…ASVM, VFQF…NHFL, VLVA…LYLA, SCSL…GGIG, FLNF…LILS, and HSFI…IFDS.

This sequence belongs to the ZIP transporter (TC 2.A.5) family.

It localises to the endoplasmic reticulum membrane. Probable zinc transporter that may mediate zinc remobilization from the endoplasmic reticulum under zinc limitation. The protein is Probable zinc transporter zip2 (zip2) of Schizosaccharomyces pombe (strain 972 / ATCC 24843) (Fission yeast).